Reading from the N-terminus, the 546-residue chain is Fusion glycoprotein F0 (546 aa).

An N-terminal signal peptide occupies residues 1 to 19; it reads MKILFATLLVVTTPHLVTG. Residues 20 to 491 are Extracellular-facing; sequence QIHWGNLSKI…TIKGASVTNT (472 aa). Residues Asn-25, Asn-57, and Asn-63 are each glycosylated (N-linked (GlcNAc...) asparagine; by host). The fusion peptide stretch occupies residues 109 to 133; the sequence is FAGVALAGAALGVATAAQITAGIAL. Residues 134 to 162 are a coiled coil; the sequence is HQSMMNTQAIESLKASLETTNQAIEEIRQ. 4 cysteine pairs are disulfide-bonded: Cys-330-Cys-339, Cys-354-Cys-362, Cys-386-Cys-391, and Cys-393-Cys-416. Residues 458–483 adopt a coiled-coil conformation; the sequence is NLGNAVTKLEKAKDLLDSSDLILETI. The helical transmembrane segment at 492–512 threads the bilayer; it reads GHILVGAGLIAVVGILIVTCC. Topologically, residues 513–546 are cytoplasmic; that stretch reads CRKRSNDSKVSTVILNPGLKPDLTGTSKSYVRSL.

Belongs to the paramyxoviruses fusion glycoprotein family. In terms of assembly, homotrimer of disulfide-linked F1-F2. The inactive precursor F0 is glycosylated and proteolytically cleaved into F1 and F2 to be functionally active. The cleavage is mediated by cellular proteases during the transport and maturation of the polypeptide.

The protein resides in the virion membrane. It is found in the host cell membrane. Its function is as follows. Class I viral fusion protein. Under the current model, the protein has at least 3 conformational states: pre-fusion native state, pre-hairpin intermediate state, and post-fusion hairpin state. During viral and plasma cell membrane fusion, the heptad repeat (HR) regions assume a trimer-of-hairpins structure, positioning the fusion peptide in close proximity to the C-terminal region of the ectodomain. The formation of this structure appears to drive apposition and subsequent fusion of viral and plasma cell membranes. Directs fusion of viral and cellular membranes leading to delivery of the nucleocapsid into the cytoplasm. This fusion is pH independent and occurs directly at the outer cell membrane. The trimer of F1-F2 (F protein) probably interacts with HN at the virion surface. Upon HN binding to its cellular receptor, the hydrophobic fusion peptide is unmasked and interacts with the cellular membrane, inducing the fusion between cell and virion membranes. Later in infection, F proteins expressed at the plasma membrane of infected cells could mediate fusion with adjacent cells to form syncytia, a cytopathic effect that could lead to tissue necrosis. This Rinderpest virus (strain Kabete O) (RDV) protein is Fusion glycoprotein F0 (F).